The following is a 769-amino-acid chain: Endothelin-converting enzyme 1 (769 aa).

Residues 1 to 67 (MRTVWSPLAA…WAARTSVEKR (67 aa)) are Cytoplasmic-facing. The residue at position 24 (T24) is a Phosphothreonine. Residues 68–88 (LVVLVTLLAAGLVACLAALGI) traverse the membrane as a helical; Signal-anchor for type II membrane protein segment. Over 89–769 (QYQTRTPPVC…MNPHHKCEVW (681 aa)) the chain is Extracellular. The Peptidase M13 domain maps to 97–769 (VCLTEACVSV…MNPHHKCEVW (673 aa)). Intrachain disulfides connect C98/C103, C121/C754, C129/C714, C184/C434, and C643/C766. 8 N-linked (GlcNAc...) asparagine glycosylation sites follow: N165, N186, N209, N269, N315, N361, N382, and N538. H606 contacts Zn(2+). E607 is an active-site residue. H610 contacts Zn(2+). 2 N-linked (GlcNAc...) asparagine glycosylation sites follow: N631 and N650. A Zn(2+)-binding site is contributed by E666. The Proton donor role is filled by D670.

The protein belongs to the peptidase M13 family. As to quaternary structure, homodimer; disulfide-linked. Interacts with PPP1R16B. Interacts with TSPAN8; this interaction recruits the endothelin converting enzyme ECE1 to tetraspanin-enriched microdomains and positively modulates its enzymatic activity. The cofactor is Zn(2+).

Its subcellular location is the cell membrane. The catalysed reaction is Hydrolysis of the 21-Trp-|-Val-22 bond in big endothelin to form endothelin 1.. Inhibited by phosphoramidon. In terms of biological role, converts big endothelin-1 to endothelin-1. The protein is Endothelin-converting enzyme 1 (Ece1) of Mus musculus (Mouse).